Consider the following 338-residue polypeptide: Anthranilate phosphoribosyltransferase (338 aa).

Residues G83, G86–D87, S91, N93–T96, K111–S119, and A123 contribute to the 5-phospho-alpha-D-ribose 1-diphosphate site. G83 lines the anthranilate pocket. S95 lines the Mg(2+) pocket. Position 114 (N114) interacts with anthranilate. R169 is an anthranilate binding site. The Mg(2+) site is built by D228 and E229.

The protein belongs to the anthranilate phosphoribosyltransferase family. In terms of assembly, homodimer. The cofactor is Mg(2+).

It carries out the reaction N-(5-phospho-beta-D-ribosyl)anthranilate + diphosphate = 5-phospho-alpha-D-ribose 1-diphosphate + anthranilate. Its pathway is amino-acid biosynthesis; L-tryptophan biosynthesis; L-tryptophan from chorismate: step 2/5. Catalyzes the transfer of the phosphoribosyl group of 5-phosphorylribose-1-pyrophosphate (PRPP) to anthranilate to yield N-(5'-phosphoribosyl)-anthranilate (PRA). The polypeptide is Anthranilate phosphoribosyltransferase (Nitratidesulfovibrio vulgaris (strain DSM 19637 / Miyazaki F) (Desulfovibrio vulgaris)).